The chain runs to 379 residues: GDSL esterase/lipase EXL2 (379 aa).

The signal sequence occupies residues 1 to 35; the sequence is MKRNSINIHHVTSFSSSPFWCVFFLVLLCKTSTNA. A glycan (N-linked (GlcNAc...) asparagine) is linked at Asn42. Ser54 serves as the catalytic Nucleophile. Catalysis depends on residues Asp358 and His361.

It belongs to the 'GDSL' lipolytic enzyme family.

The protein resides in the secreted. In Arabidopsis thaliana (Mouse-ear cress), this protein is GDSL esterase/lipase EXL2 (EXL2).